The primary structure comprises 503 residues: Na(+)-translocating NADH-quinone reductase subunit B (503 aa).

4 consecutive transmembrane segments (helical) span residues 55 to 75 (MILVVVALFPATFSAIWNSGV), 120 to 142 (IFLPLLIISYSVGGACEVLFAVI), 161 to 181 (TLPPTIPYWMAALGIAFGVVV), and 186 to 206 (FGGTGMNILNPALSGRAFLFF). Position 248 is an FMN phosphoryl threonine (T248). 5 helical membrane passes run 361 to 381 (TSTFACLLGAIFLIVTGIASW), 387 to 407 (FGIGAFVTAWLFKIVSILIVG), 417 to 437 (FFIPAYRQLFLGGLAFGLVFM), 452 to 472 (WIYGLFIGFMTILIRLINPAY), and 475 to 495 (GVMLAILLGNVFAPLLDYFAV).

The protein belongs to the NqrB/RnfD family. In terms of assembly, composed of six subunits; NqrA, NqrB, NqrC, NqrD, NqrE and NqrF. The cofactor is FMN.

The protein localises to the cell inner membrane. It carries out the reaction a ubiquinone + n Na(+)(in) + NADH + H(+) = a ubiquinol + n Na(+)(out) + NAD(+). Its function is as follows. NQR complex catalyzes the reduction of ubiquinone-1 to ubiquinol by two successive reactions, coupled with the transport of Na(+) ions from the cytoplasm to the periplasm. NqrA to NqrE are probably involved in the second step, the conversion of ubisemiquinone to ubiquinol. The chain is Na(+)-translocating NADH-quinone reductase subunit B from Chlamydia felis (strain Fe/C-56) (Chlamydophila felis).